Consider the following 444-residue polypeptide: tRNA pseudouridine synthase Pus10 (444 aa).

D265 (nucleophile) is an active-site residue. Positions 333 and 405 each coordinate substrate.

The protein belongs to the pseudouridine synthase Pus10 family.

The enzyme catalyses uridine(54) in tRNA = pseudouridine(54) in tRNA. The catalysed reaction is uridine(55) in tRNA = pseudouridine(55) in tRNA. Its function is as follows. Responsible for synthesis of pseudouridine from uracil-54 and uracil-55 in the psi GC loop of transfer RNAs. This is tRNA pseudouridine synthase Pus10 from Thermofilum pendens (strain DSM 2475 / Hrk 5).